Here is a 276-residue protein sequence, read N- to C-terminus: Large ribosomal subunit protein uL2 (276 aa).

The tract at residues 218–255 (PTVRGSAMNPCDHPHGGGEGRTPIGMSSPVTPWGKPAL) is disordered.

The protein belongs to the universal ribosomal protein uL2 family. Part of the 50S ribosomal subunit. Forms a bridge to the 30S subunit in the 70S ribosome.

In terms of biological role, one of the primary rRNA binding proteins. Required for association of the 30S and 50S subunits to form the 70S ribosome, for tRNA binding and peptide bond formation. It has been suggested to have peptidyltransferase activity; this is somewhat controversial. Makes several contacts with the 16S rRNA in the 70S ribosome. This Clostridium tetani (strain Massachusetts / E88) protein is Large ribosomal subunit protein uL2.